We begin with the raw amino-acid sequence, 3133 residues long: Probable polyketide synthase 38 (3133 aa).

The region spanning Asp-9–Glu-440 is the Ketosynthase family 3 (KS3) domain. Residues Cys-181, His-320, and His-363 each act as for beta-ketoacyl synthase activity in the active site. The acyl/malonyl transferase stretch occupies residues Gly-647 to Tyr-680. Ser-657 acts as the For acyl/malonyl transferase activity in catalysis. The segment at Gly-945–Ile-1067 is N-terminal hotdog fold. The 304-residue stretch at Gly-945–Ser-1248 folds into the PKS/mFAS DH domain. His-979 functions as the Proton acceptor; for dehydratase activity in the catalytic mechanism. A C-terminal hotdog fold region spans residues Asn-1083–Ser-1248. Asp-1155 acts as the Proton donor; for dehydratase activity in catalysis. Residues Asn-1370–Asn-1408 form a disordered region. The region spanning Asn-2562–His-2639 is the Carrier domain. O-(pantetheine 4'-phosphoryl)serine is present on Ser-2599. The stretch at Asn-2649–Asn-2711 forms a coiled coil. Disordered regions lie at residues Leu-2691–Asn-2715 and Gly-2794–Gln-2817. 2 stretches are compositionally biased toward low complexity: residues Asn-2692–Asn-2715 and Asn-2795–Gln-2817.

Pantetheine 4'-phosphate is required as a cofactor.

Probable polyketide synthase. The sequence is that of Probable polyketide synthase 38 (pks38) from Dictyostelium discoideum (Social amoeba).